A 490-amino-acid polypeptide reads, in one-letter code: GTPase Der (490 aa).

2 EngA-type G domains span residues 3–166 (PVVA…MDDV) and 203–376 (IKLA…DSST). Residues 9-16 (GRPNVGKS), 56-60 (DTGGI), 118-121 (NKTD), 209-216 (GRPNVGKS), 256-260 (DTAGV), and 321-324 (NKWD) contribute to the GTP site. The 85-residue stretch at 377 to 461 (RRVSTAMLTR…PIRIQFKEGE (85 aa)) folds into the KH-like domain.

It belongs to the TRAFAC class TrmE-Era-EngA-EngB-Septin-like GTPase superfamily. EngA (Der) GTPase family. As to quaternary structure, associates with the 50S ribosomal subunit.

Its function is as follows. GTPase that plays an essential role in the late steps of ribosome biogenesis. The sequence is that of GTPase Der from Salmonella enteritidis PT4 (strain P125109).